The sequence spans 535 residues: 3-hydroxyindolin-2-one monooxygenase (535 aa).

The next 2 helical transmembrane spans lie at 14–34 (VVQC…LLAI) and 469–489 (ICAG…NLIY). C470 is a heme binding site.

It belongs to the cytochrome P450 family. Heme is required as a cofactor.

It is found in the membrane. It catalyses the reaction 3-hydroxyindolin-2-one + reduced [NADPH--hemoprotein reductase] + O2 = 2-hydroxy-2H-1,4-benzoxazin-3(4H)-one + oxidized [NADPH--hemoprotein reductase] + H2O + H(+). It functions in the pathway secondary metabolite biosynthesis; 2,4-dihydroxy-1,4-benzoxazin-3-one biosynthesis; 2,4-dihydroxy-1,4-benzoxazin-3-one from indoleglycerol phosphate: step 4/5. Catalyzes the conversion of 3-hydroxyindolin-2-one to 2-hydroxy-1,4-benzoxazin-3-one (HBOA). This is 3-hydroxyindolin-2-one monooxygenase (CYP71C1) from Zea mays (Maize).